A 210-amino-acid chain; its full sequence is Large ribosomal subunit protein bL25 (210 aa).

Residues 191–200 (EAPAEGAAAP) are compositionally biased toward low complexity. Residues 191 to 210 (EAPAEGAAAPAPAPAKKGKK) are disordered.

The protein belongs to the bacterial ribosomal protein bL25 family. CTC subfamily. Part of the 50S ribosomal subunit; part of the 5S rRNA/L5/L18/L25 subcomplex. Contacts the 5S rRNA. Binds to the 5S rRNA independently of L5 and L18.

Its function is as follows. This is one of the proteins that binds to the 5S RNA in the ribosome where it forms part of the central protuberance. The protein is Large ribosomal subunit protein bL25 of Paracidovorax citrulli (strain AAC00-1) (Acidovorax citrulli).